The following is a 433-amino-acid chain: Glutamate-1-semialdehyde 2,1-aminomutase (433 aa).

Position 265 is an N6-(pyridoxal phosphate)lysine (K265).

This sequence belongs to the class-III pyridoxal-phosphate-dependent aminotransferase family. HemL subfamily. Homodimer. The cofactor is pyridoxal 5'-phosphate.

The protein localises to the cytoplasm. It catalyses the reaction (S)-4-amino-5-oxopentanoate = 5-aminolevulinate. It functions in the pathway porphyrin-containing compound metabolism; protoporphyrin-IX biosynthesis; 5-aminolevulinate from L-glutamyl-tRNA(Glu): step 2/2. The polypeptide is Glutamate-1-semialdehyde 2,1-aminomutase (Shewanella denitrificans (strain OS217 / ATCC BAA-1090 / DSM 15013)).